The following is a 196-amino-acid chain: Protein LURP-one-related 8 (196 aa).

Belongs to the LOR family.

Might be related to the phospholipid scramblase and tubby-like superfamily of membrane tethered transcription factors. This chain is Protein LURP-one-related 8, found in Arabidopsis thaliana (Mouse-ear cress).